A 128-amino-acid chain; its full sequence is MADMAKFEEEISKLKTLEKDREKYFSSRQEMEMRLTESKNVKAELDLMDSDSKVYKLMGPVLVRQDLEEARSTVEKRLEFIESEIKRVEASITDVNKKSIEQRDKVMNMQKAFQMMATQAQQQAAQKK.

Belongs to the prefoldin subunit beta family. Heterohexamer of two PFD-alpha type and four PFD-beta type subunits.

It localises to the cytoplasm. Its function is as follows. Binds specifically to cytosolic chaperonin (c-CPN) and transfers target proteins to it. Binds to nascent polypeptide chain and promotes folding in an environment in which there are many competing pathways for nonnative proteins. Required for positioning of the mitotic spindle. This Caenorhabditis briggsae protein is Probable prefoldin subunit 6.